Here is a 186-residue protein sequence, read N- to C-terminus: Large ribosomal subunit protein uL22 (186 aa).

The tract at residues 159 to 186 is disordered; it reads KAAENEPAKKKLSKKKLQRQKEKMMRNE. The segment covering 177–186 has biased composition (basic and acidic residues); the sequence is RQKEKMMRNE.

This sequence belongs to the universal ribosomal protein uL22 family.

In Aedes albopictus (Asian tiger mosquito), this protein is Large ribosomal subunit protein uL22 (RpL17).